The following is a 222-amino-acid chain: 2-C-methyl-D-erythritol 4-phosphate cytidylyltransferase (222 aa).

Belongs to the IspD/TarI cytidylyltransferase family. IspD subfamily.

It catalyses the reaction 2-C-methyl-D-erythritol 4-phosphate + CTP + H(+) = 4-CDP-2-C-methyl-D-erythritol + diphosphate. The protein operates within isoprenoid biosynthesis; isopentenyl diphosphate biosynthesis via DXP pathway; isopentenyl diphosphate from 1-deoxy-D-xylulose 5-phosphate: step 2/6. Functionally, catalyzes the formation of 4-diphosphocytidyl-2-C-methyl-D-erythritol from CTP and 2-C-methyl-D-erythritol 4-phosphate (MEP). This Thermotoga petrophila (strain ATCC BAA-488 / DSM 13995 / JCM 10881 / RKU-1) protein is 2-C-methyl-D-erythritol 4-phosphate cytidylyltransferase.